Reading from the N-terminus, the 521-residue chain is Cell cycle checkpoint protein hpr-9 (521 aa).

3 disordered regions span residues 1–20 (MQAI…TRER), 318–375 (QHEE…NRFV), and 492–521 (GTET…YESR). Polar residues-rich tracts occupy residues 355 to 370 (ESLS…SLPS) and 493 to 504 (TETTSKMRMSQQ).

It belongs to the rad9 family. Putative component of the toroidal 9-1-1 (RAD9-RAD1-HUS1) complex, composed of hpr-9, mrt-2 and hus-1.

Functionally, may be a component of the 9-1-1 cell-cycle checkpoint response complex that plays a major role in DNA repair. The chain is Cell cycle checkpoint protein hpr-9 from Caenorhabditis elegans.